The sequence spans 131 residues: MSMSDPIADMLTRIRNAQMVEKVSVTMPSSKVKVAIAQVLKDEGYIDDFAVKAEGAKSELNIALKYYAGRPVIERLERVSKPGLRVYRGRNDIPQVMNGLGVAIVSTPKGVMTDRKARATGVGGEVICYVA.

Belongs to the universal ribosomal protein uS8 family. As to quaternary structure, part of the 30S ribosomal subunit. Contacts proteins S5 and S12.

In terms of biological role, one of the primary rRNA binding proteins, it binds directly to 16S rRNA central domain where it helps coordinate assembly of the platform of the 30S subunit. The protein is Small ribosomal subunit protein uS8 of Paraburkholderia phymatum (strain DSM 17167 / CIP 108236 / LMG 21445 / STM815) (Burkholderia phymatum).